The primary structure comprises 3567 residues: Erythronolide synthase EryA2 (3567 aa).

Residues 30 to 455 enclose the Ketosynthase family 3 (KS3) 1 domain; the sequence is SDPIAIVSMA…GTNAHVIVEE (426 aa). Module regions lie at residues 33 to 1467 and 1491 to 3485; these read IAIV…QHLR and IAIV…EHLR. Cys-202 serves as the catalytic Acyl-thioester intermediate; for beta-ketoacyl synthase 1 activity. Active-site for beta-ketoacyl synthase 1 activity residues include His-337 and His-377. An acyltransferase 1 region spans residues 560–880; it reads VFLFPGQGSQ…MATAHVSGVD (321 aa). Ser-651 serves as the catalytic Acyl-ester intermediate; for acyltransferase 1 activity. Positions 1132-1297 are C2-type beta-ketoacyl reductase 1; sequence GTVLVTGAAS…CTSVAWTPWA (166 aa). The active-site For C2-type beta-ketoacyl reductase 1 and probable racemase activity is the Tyr-1267. A disordered region spans residues 1364-1385; sequence GRGGQAEAEPDSGPTGEPAQRL. Residues 1395 to 1470 form the Carrier 1 domain; sequence ENLLELVANA…ALAQHLRARL (76 aa). Ser-1430 is modified (O-(pantetheine 4'-phosphoryl)serine). Residues 1488–1912 form the Ketosynthase family 3 (KS3) 2 domain; that stretch reads SEPIAIVGIG…GTNAHVIVEE (425 aa). Cys-1661 acts as the Acyl-thioester intermediate; for beta-ketoacyl synthase 2 activity in catalysis. Residues His-1796 and His-1834 each act as for beta-ketoacyl synthase 2 activity in the active site. An acyltransferase 2 region spans residues 2015–2331; sequence LVFPGQGAQW…NLLRAHVHGV (317 aa). Residue Ser-2105 is the Acyl-ester intermediate; for acyltransferase 2 activity of the active site. Residues 2377–2502 are N-terminal hotdog fold; the sequence is HPLLLAAVDV…GTLAQGVAAG (126 aa). Residues 2377-2645 form a dehydratase region; it reads HPLLLAAVDV…SLVVRSTGEK (269 aa). One can recognise a PKS/mFAS DH domain in the interval 2377 to 2648; that stretch reads HPLLLAAVDV…VRSTGEKWEQ (272 aa). The active-site Proton acceptor; for dehydratase activity is the His-2409. Positions 2514-2648 are C-terminal hotdog fold; sequence AVRIPLDDHY…VRSTGEKWEQ (135 aa). Asp-2571 serves as the catalytic Proton donor; for dehydratase activity. An enoyl reductase region spans residues 2831–3131; sequence GAIDSVAFEP…RGRHVGKLVL (301 aa). Tyr-2874 (for enoyl reductase activity) is an active-site residue. NADP(+)-binding positions include 2964–2973, 3149–3152, 3173–3176, 3202–3203, Lys-3250, and 3272–3273; these read HAAAGGVGMA, TGTL, SRRG, DT, and FS. The interval 3141 to 3317 is beta-ketoacyl reductase 2; the sequence is GTVLITGGTG…AKALGWGLWA (177 aa). Tyr-3287 (for beta-ketoacyl reductase 2 activity) is an active-site residue. One can recognise a Carrier 2 domain in the interval 3413–3488; the sequence is AGLAELVRSH…AVAEHLRDRL (76 aa). Residue Ser-3448 is modified to O-(pantetheine 4'-phosphoryl)serine.

As to quaternary structure, homodimer. Erythronolide synthase is composed of EryAI, EryAII and EryAIII multimodular (2 modules) polypeptides each coding for a functional synthase subunit which participates in 2 of the six FAS-like elongation steps required for formation of the polyketide. Module 1, 2, 3, 4, 5, and 6 participating in biosynthesis steps 1, 2, 3, 4, 5, and 6, respectively. Pantetheine 4'-phosphate serves as cofactor.

It catalyses the reaction 6 (S)-methylmalonyl-CoA + propanoyl-CoA + 6 NADPH + 12 H(+) = 6-deoxyerythronolide B + 6 CO2 + 6 NADP(+) + 7 CoA + H2O. It functions in the pathway antibiotic biosynthesis; erythromycin biosynthesis. In terms of biological role, involved in the biosynthesis of antibiotic erythromycin via the biosynthesis of its aglycone precursor, 6-deoxyerythronolide B (6-dEB). In Saccharopolyspora erythraea (Streptomyces erythraeus), this protein is Erythronolide synthase EryA2.